A 616-amino-acid chain; its full sequence is Dihydroxy-acid dehydratase (616 aa).

Residue Asp81 coordinates Mg(2+). Residue Cys122 coordinates [2Fe-2S] cluster. Mg(2+) contacts are provided by Asp123 and Lys124. The residue at position 124 (Lys124) is an N6-carboxylysine. Cys195 is a [2Fe-2S] cluster binding site. Residue Glu491 participates in Mg(2+) binding. Ser517 acts as the Proton acceptor in catalysis.

This sequence belongs to the IlvD/Edd family. As to quaternary structure, homodimer. [2Fe-2S] cluster is required as a cofactor. It depends on Mg(2+) as a cofactor.

The catalysed reaction is (2R)-2,3-dihydroxy-3-methylbutanoate = 3-methyl-2-oxobutanoate + H2O. It catalyses the reaction (2R,3R)-2,3-dihydroxy-3-methylpentanoate = (S)-3-methyl-2-oxopentanoate + H2O. Its pathway is amino-acid biosynthesis; L-isoleucine biosynthesis; L-isoleucine from 2-oxobutanoate: step 3/4. The protein operates within amino-acid biosynthesis; L-valine biosynthesis; L-valine from pyruvate: step 3/4. Functions in the biosynthesis of branched-chain amino acids. Catalyzes the dehydration of (2R,3R)-2,3-dihydroxy-3-methylpentanoate (2,3-dihydroxy-3-methylvalerate) into 2-oxo-3-methylpentanoate (2-oxo-3-methylvalerate) and of (2R)-2,3-dihydroxy-3-methylbutanoate (2,3-dihydroxyisovalerate) into 2-oxo-3-methylbutanoate (2-oxoisovalerate), the penultimate precursor to L-isoleucine and L-valine, respectively. This is Dihydroxy-acid dehydratase from Escherichia coli (strain SMS-3-5 / SECEC).